The chain runs to 213 residues: Bacteriochlorophyll synthase 23 kDa chain (213 aa).

It participates in porphyrin-containing compound metabolism; bacteriochlorophyll biosynthesis (light-independent). The chain is Bacteriochlorophyll synthase 23 kDa chain (bchJ) from Rhodobacter capsulatus (strain ATCC BAA-309 / NBRC 16581 / SB1003).